The following is a 519-amino-acid chain: Glutamate--cysteine ligase (519 aa).

Belongs to the glutamate--cysteine ligase type 1 family. Type 1 subfamily.

It carries out the reaction L-cysteine + L-glutamate + ATP = gamma-L-glutamyl-L-cysteine + ADP + phosphate + H(+). The protein operates within sulfur metabolism; glutathione biosynthesis; glutathione from L-cysteine and L-glutamate: step 1/2. The chain is Glutamate--cysteine ligase from Photorhabdus laumondii subsp. laumondii (strain DSM 15139 / CIP 105565 / TT01) (Photorhabdus luminescens subsp. laumondii).